A 431-amino-acid chain; its full sequence is Urokinase-type plasminogen activator (431 aa).

The N-terminal stretch at 1-20 is a signal peptide; the sequence is MRALLARLLLCVLVVSDSKG. Residues 27–63 enclose the EGF-like domain; that stretch reads VPSNCDCLNGGTCVSNKYFSNIHWCNCPKKFGGQHCE. 6 disulfides stabilise this stretch: C31/C39, C33/C51, C53/C62, C70/C151, C91/C133, and C122/C146. Positions 34 to 57 are binds urokinase plasminogen activator surface receptor; sequence LNGGTCVSNKYFSNIHWCNCPKKF. O-linked (Fuc) threonine glycosylation occurs at T38. In terms of domain architecture, Kringle spans 70–151; that stretch reads CYEGNGHFYR…LVQECMVHDC (82 aa). The tract at residues 152–177 is connecting peptide; sequence ADGKKPSSPPEELKFQCGQKTLRPRF. S158 is subject to Phosphoserine. 6 disulfides stabilise this stretch: C168/C299, C209/C225, C217/C288, C313/C382, C345/C361, and C372/C400. The region spanning 179-424 is the Peptidase S1 domain; that stretch reads IIGGEFTTIE…FLPWIRSHTK (246 aa). Active-site charge relay system residues include H224 and D275. The N-linked (GlcNAc...) asparagine glycan is linked to N322. S323 bears the Phosphoserine mark. Catalysis depends on S376, which acts as the Charge relay system.

This sequence belongs to the peptidase S1 family. As to quaternary structure, found in high and low molecular mass forms. Each consists of two chains, A and B. The high molecular mass form contains a long chain A which is cleaved to yield a short chain A. Forms heterodimer with SERPINA5. Binds LRP1B; binding is followed by internalization and degradation. Interacts with MRC2. Interacts with PLAUR. In complex with SERPINE1, interacts with PLAUR/uPAR. Interacts with SORL1 and LRP1, either alone or in complex with SERPINE1; these interactions are abolished in the presence of LRPAP1/RAP. The ternary complex composed of PLAUR-PLAU-PAI1 also interacts with SORLA. Phosphorylation of Ser-158 and Ser-323 abolishes proadhesive ability but does not interfere with receptor binding. Post-translationally, produced as an inactive single-chain protein (pro-uPA or sc-uPA), is processed into the active disulfide-linked two-chain form of PLAU/uPA by a proteolytic event mediated, at least, by TMPRSS4. In terms of tissue distribution, expressed in the prostate gland and prostate cancers.

It localises to the secreted. The catalysed reaction is Specific cleavage of Arg-|-Val bond in plasminogen to form plasmin.. Its activity is regulated as follows. Inhibited by SERPINA5. Inhibited by SERPINE1. In terms of biological role, specifically cleaves the zymogen plasminogen to form the active enzyme plasmin. The sequence is that of Urokinase-type plasminogen activator from Homo sapiens (Human).